We begin with the raw amino-acid sequence, 1282 residues long: ATP-dependent helicase/nuclease subunit A (1282 aa).

A UvrD-like helicase ATP-binding domain is found at 10 to 481; sequence SKWTDSQRQV…IELQENFRSS (472 aa). Residue 31–38 participates in ATP binding; the sequence is AGAGAGKT. A UvrD-like helicase C-terminal domain is found at 516–820; it reads KPRELYLNED…RLMSIHKSKG (305 aa).

This sequence belongs to the helicase family. AddA subfamily. Heterodimer of AddA and AddB/RexB. It depends on Mg(2+) as a cofactor.

The enzyme catalyses Couples ATP hydrolysis with the unwinding of duplex DNA by translocating in the 3'-5' direction.. It carries out the reaction ATP + H2O = ADP + phosphate + H(+). The heterodimer acts as both an ATP-dependent DNA helicase and an ATP-dependent, dual-direction single-stranded exonuclease. Recognizes the chi site generating a DNA molecule suitable for the initiation of homologous recombination. The AddA nuclease domain is required for chi fragment generation; this subunit has the helicase and 3' -&gt; 5' nuclease activities. The polypeptide is ATP-dependent helicase/nuclease subunit A (Natranaerobius thermophilus (strain ATCC BAA-1301 / DSM 18059 / JW/NM-WN-LF)).